Consider the following 101-residue polypeptide: NADH-quinone oxidoreductase subunit K (101 aa).

The next 3 helical transmembrane spans lie at leucine 4–leucine 24, isoleucine 30–phenylalanine 50, and isoleucine 61–leucine 81.

This sequence belongs to the complex I subunit 4L family. In terms of assembly, NDH-1 is composed of 14 different subunits. Subunits NuoA, H, J, K, L, M, N constitute the membrane sector of the complex.

It localises to the cell inner membrane. It carries out the reaction a quinone + NADH + 5 H(+)(in) = a quinol + NAD(+) + 4 H(+)(out). NDH-1 shuttles electrons from NADH, via FMN and iron-sulfur (Fe-S) centers, to quinones in the respiratory chain. The immediate electron acceptor for the enzyme in this species is believed to be ubiquinone. Couples the redox reaction to proton translocation (for every two electrons transferred, four hydrogen ions are translocated across the cytoplasmic membrane), and thus conserves the redox energy in a proton gradient. The protein is NADH-quinone oxidoreductase subunit K of Burkholderia cenocepacia (strain HI2424).